Consider the following 240-residue polypeptide: Ribonuclease 3 (240 aa).

An RNase III domain is found at Asp13–Gly143. Position 53 (Glu53) interacts with Mg(2+). Residue Asp57 is part of the active site. Mg(2+) is bound by residues Asp129 and Glu132. Glu132 is a catalytic residue. The DRBM domain occupies Asp170–Ala238.

Belongs to the ribonuclease III family. Homodimer. Mg(2+) serves as cofactor.

Its subcellular location is the cytoplasm. The enzyme catalyses Endonucleolytic cleavage to 5'-phosphomonoester.. In terms of biological role, digests double-stranded RNA. Involved in the processing of primary rRNA transcript to yield the immediate precursors to the large and small rRNAs (23S and 16S). Processes some mRNAs, and tRNAs when they are encoded in the rRNA operon. Processes pre-crRNA and tracrRNA of type II CRISPR loci if present in the organism. The polypeptide is Ribonuclease 3 (Nocardia farcinica (strain IFM 10152)).